A 655-amino-acid polypeptide reads, in one-letter code: Epithelial sodium channel subunit alpha (655 aa).

Residues 1–55 (MTDKEEEAEGGKKKEPMIGFYDSYQELFEFFCNNTTIHGTIRMVCSKHNNMKTVS) are Cytoplasmic-facing. The chain crosses the membrane as a helical span at residues 56-76 (WTILFITTFGVMYWQFGLLLG). The Extracellular segment spans residues 77-531 (QYYSYPVSIT…SQWSLWFGSS (455 aa)). Intrachain disulfides connect C102/C275, C199/C206, C252/C259, C364/C448, C385/C425, C385/C444, C389/C440, C398/C425, C398/C448, and C400/C414. Residues 532–552 (VLSVVEMGELVFDLIAVGVIV) form a helical membrane-spanning segment. The Cytoplasmic segment spans residues 553 to 655 (LRRRRREKCQ…QEASEGPTVL (103 aa)). Positions 561–587 (CQASSDGEGTSDSTAGTHRGQENASRS) are disordered. The span at 562–586 (QASSDGEGTSDSTAGTHRGQENASR) shows a compositional bias: polar residues.

The protein belongs to the amiloride-sensitive sodium channel (TC 1.A.6) family. SCNN1A subfamily. In terms of assembly, heterotrimer; containing an alpha/SCNN1A, a beta/SCNN1B and a gamma/SCNN1G subunit. In terms of tissue distribution, strongly expressed in gill, kidney and rectum (at protein level). More weakly expressed in muscle, brain, heart, liver and intestine.

It is found in the apical cell membrane. Its subcellular location is the cell projection. The protein resides in the cilium. The protein localises to the cytoplasmic granule. It localises to the cytoplasm. It is found in the cytoplasmic vesicle. Its subcellular location is the secretory vesicle. The protein resides in the acrosome. The protein localises to the flagellum. It carries out the reaction Na(+)(in) = Na(+)(out). Originally identified and characterized by its inhibition by the diuretic drug amiloride. Its function is as follows. This is one of the three pore-forming subunits of the heterotrimeric epithelial sodium channel (ENaC), a critical regulator of sodium balance and fluid homeostasis. ENaC operates in epithelial tissues, where it mediates the electrodiffusion of sodium ions from extracellular fluid through the apical membrane of cells, with water following osmotically. In Neoceratodus forsteri (Australian lungfish), this protein is Epithelial sodium channel subunit alpha (scnn1a).